Consider the following 936-residue polypeptide: Myocardin-related transcription factor A (936 aa).

RPEL repeat units lie at residues 15-40 (TVLQLKLQQRRTREELENQGIMPPLK), 59-84 (DYLKRKIRSRPERAELVRMHILEETS), and 103-128 (DDLNEKISQRPGPMELVVKNILPVET). A Bipartite Nuclear localization signal motif is present at residues 62–100 (KRKIRSRPERAELVRMHILEETSAEPSLQAKQIKLKRAR). 3 disordered regions span residues 146–185 (SSFDEDSSDALSPEQPASQESQGSIPSPIENRPSETTQIP), 234–258 (SQPKPSFEKSQRIKKPKEPKPKVKK), and 401–422 (SQDPSTATAASAKPTPVQQAKP). Positions 160–170 (QPASQESQGSI) are enriched in polar residues. The segment covering 239 to 254 (SFEKSQRIKKPKEPKP) has biased composition (basic and acidic residues). The SAP domain maps to 368-402 (LDEMKVAELKLELKHRGLPVSGTKIDLIERLKASQ). Positions 404–416 (PSTATAASAKPTP) are enriched in low complexity. Residues 497–542 (DARDKDLMLREKDRQIEELTQRLKQKQELVERLRQQLEQEKRTPQH) are a coiled coil. The segment at 707-755 (HNESPATPPQQPEPEPPPHSIFLTHSSPQWSKNPPGYDEAMKQQPNSCE) is disordered. Positions 712–725 (ATPPQQPEPEPPPH) are enriched in pro residues. The span at 729 to 738 (LTHSSPQWSK) shows a compositional bias: polar residues.

As to quaternary structure, interacts with srf, forming the srf-mrtfa nuclear complex which binds the 5'-CArG-3' consensus motif (CArG box) on DNA via srf. Interacts (via RPEL repeats) with globular actin (G-actin), thereby regulating its subcellular location and activity of the complex formed with srf.

The protein resides in the cytoplasm. It localises to the nucleus. Transcription coactivator that associates with the serum response factor (srf) transcription factor to control expression of genes regulating the cytoskeleton during development, morphogenesis and cell migration. The srf-mrtfa complex activity responds to Rho GTPase-induced changes in cellular globular actin (G-actin) concentration, thereby coupling cytoskeletal gene expression to cytoskeletal dynamics. Mrtfa binds G-actin via its RPEL repeats, regulating activity of the mrtfa-srf complex. Activity is also regulated by filamentous actin (F-actin) in the nucleus. This chain is Myocardin-related transcription factor A (mrtfa), found in Xenopus laevis (African clawed frog).